The chain runs to 548 residues: Hydroxylamine reductase (548 aa).

[4Fe-4S] cluster-binding residues include C3, C6, C15, and C21. Residues H239, E263, C307, C401, C429, C454, E489, and K491 each contribute to the hybrid [4Fe-2O-2S] cluster site. Residue C401 is modified to Cysteine persulfide.

The protein belongs to the HCP family. [4Fe-4S] cluster serves as cofactor. Hybrid [4Fe-2O-2S] cluster is required as a cofactor.

The protein resides in the cytoplasm. It carries out the reaction A + NH4(+) + H2O = hydroxylamine + AH2 + H(+). In terms of biological role, catalyzes the reduction of hydroxylamine to form NH(3) and H(2)O. The sequence is that of Hydroxylamine reductase from Desulfosudis oleivorans (strain DSM 6200 / JCM 39069 / Hxd3) (Desulfococcus oleovorans).